Reading from the N-terminus, the 176-residue chain is ATP-dependent protease subunit HslV (176 aa).

Thr-2 is an active-site residue. Na(+)-binding residues include Gly-157, Cys-160, and Thr-163.

It belongs to the peptidase T1B family. HslV subfamily. A double ring-shaped homohexamer of HslV is capped on each side by a ring-shaped HslU homohexamer. The assembly of the HslU/HslV complex is dependent on binding of ATP.

It is found in the cytoplasm. It carries out the reaction ATP-dependent cleavage of peptide bonds with broad specificity.. With respect to regulation, allosterically activated by HslU binding. Protease subunit of a proteasome-like degradation complex believed to be a general protein degrading machinery. In Pectobacterium carotovorum subsp. carotovorum (strain PC1), this protein is ATP-dependent protease subunit HslV.